The primary structure comprises 279 residues: Urease accessory protein UreD (279 aa).

Belongs to the UreD family. As to quaternary structure, ureD, UreF and UreG form a complex that acts as a GTP-hydrolysis-dependent molecular chaperone, activating the urease apoprotein by helping to assemble the nickel containing metallocenter of UreC. The UreE protein probably delivers the nickel.

The protein resides in the cytoplasm. In terms of biological role, required for maturation of urease via the functional incorporation of the urease nickel metallocenter. This chain is Urease accessory protein UreD, found in Pseudomonas fluorescens (strain ATCC BAA-477 / NRRL B-23932 / Pf-5).